Here is a 229-residue protein sequence, read N- to C-terminus: uncharacterized protein (229 aa).

The interval 1–41 is disordered; sequence MRSAKVGVARQLETKKPQTGRKISTSSRGTIHSQQSQPEDI. The span at 21–39 shows a compositional bias: polar residues; sequence RKISTSSRGTIHSQQSQPE. EF-hand domains are found at residues 48 to 83, 84 to 119, 123 to 158, and 159 to 193; these read KELK…IGLH, ANKA…SQNI, TNEE…FGDF, and DDEL…YLLN. 13 residues coordinate Ca(2+): Asp61, Asp63, Ser65, Glu72, Asp97, Asp99, Asn101, Glu103, Glu108, Asp136, Asp138, Asn140, and Glu147. The span at 194–217 shows a compositional bias: basic and acidic residues; sequence DPKHDIDTGDSDVERYDDRHDDRA. The interval 194–229 is disordered; that stretch reads DPKHDIDTGDSDVERYDDRHDDRASPMPNHLSTVPE.

This is an uncharacterized protein from Caenorhabditis elegans.